A 168-amino-acid chain; its full sequence is Phosphopantetheine adenylyltransferase (168 aa).

Thr14 serves as a coordination point for substrate. ATP contacts are provided by residues 14 to 15 (TF) and His22. Substrate contacts are provided by Lys46, Leu78, and Arg92. Residues 93–95 (GLR), Glu103, and 128–134 (YSFISSS) each bind ATP.

This sequence belongs to the bacterial CoaD family. In terms of assembly, homohexamer. Mg(2+) is required as a cofactor.

The protein localises to the cytoplasm. The enzyme catalyses (R)-4'-phosphopantetheine + ATP + H(+) = 3'-dephospho-CoA + diphosphate. It participates in cofactor biosynthesis; coenzyme A biosynthesis; CoA from (R)-pantothenate: step 4/5. Functionally, reversibly transfers an adenylyl group from ATP to 4'-phosphopantetheine, yielding dephospho-CoA (dPCoA) and pyrophosphate. The protein is Phosphopantetheine adenylyltransferase of Xanthomonas oryzae pv. oryzae (strain MAFF 311018).